The chain runs to 1289 residues: Outer capsid protein lambda-2 (1289 aa).

893-900 (GAAAAGKS) contacts ATP.

It belongs to the orthoreovirus lambda-2 protein family. Interacts with protein mu-NS; in viral inclusions.

Its subcellular location is the virion. The enzyme catalyses a 5'-end diphospho-ribonucleoside in mRNA + GTP + H(+) = a 5'-end (5'-triphosphoguanosine)-ribonucleoside in mRNA + diphosphate. It catalyses the reaction a 5'-end (5'-triphosphoguanosine)-ribonucleoside in mRNA + S-adenosyl-L-methionine = a 5'-end (N(7)-methyl 5'-triphosphoguanosine)-ribonucleoside in mRNA + S-adenosyl-L-homocysteine. Outer capsid protein involved in mRNA capping. Catalyzes the last 3 enzymatic activities for formation of the 5' cap structure on the viral plus-strand transcripts, namely the RNA guanylyltransferase, RNA-7N- and RNA-2'O-methyltransferase activities. The sequence is that of Outer capsid protein lambda-2 (L2) from Reovirus type 1 (strain Lang) (T1L).